The chain runs to 83 residues: Alpha-neurotoxin NTX-1 (83 aa).

The N-terminal stretch at 1–21 is a signal peptide; the sequence is MKTLLLTLLVVTIVCLDLGYT. Cystine bridges form between cysteine 24-cysteine 45, cysteine 38-cysteine 62, cysteine 64-cysteine 75, and cysteine 76-cysteine 81.

Belongs to the three-finger toxin family. Short-chain subfamily. Type I alpha-neurotoxin sub-subfamily. Expressed by the venom gland.

It localises to the secreted. Its function is as follows. Binds to muscle nicotinic acetylcholine receptor (nAChR) and inhibit acetylcholine from binding to the receptor, thereby impairing neuromuscular transmission. This is Alpha-neurotoxin NTX-1 from Naja sputatrix (Malayan spitting cobra).